The following is a 769-amino-acid chain: Serine protease HtrA-like (769 aa).

Over residues 1–20 the composition is skewed to basic residues; the sequence is MDIGKKHVIPKSQYRRKRRE. The tract at residues 1-390 is disordered; the sequence is MDIGKKHVIP…ATSKLNKGRA (390 aa). Basic and acidic residues-rich tracts occupy residues 21–64 and 71–108; these read FFHN…ERFK and LEQR…DVSK. Polar residues predominate over residues 126 to 137; sequence YEQNSEATLSTK. The segment covering 138 to 186 has biased composition (basic and acidic residues); that stretch reads STDKVESTEMRKLSSDKNKVGHEEQHVLSKPSEHDKETRIDSESSRTDS. Residues 247–262 are compositionally biased toward polar residues; the sequence is QQSQNEQTKTYTYGDS. 2 stretches are compositionally biased toward basic and acidic residues: residues 264–296 and 310–330; these read QNDK…HIVD and KTDD…HKQN. Residues 331 to 347 are compositionally biased toward polar residues; the sequence is ADSSETVGYQSQSTASH. Over residues 348 to 364 the composition is skewed to basic and acidic residues; the sequence is RSTEKRNISINDHDKLN. Positions 365–390 are enriched in polar residues; sequence GQKTNTKTSANNNQKKATSKLNKGRA. A helical transmembrane segment spans residues 410-430; the sequence is LVILMGIIILIVILNAIFNNV. Catalysis depends on charge relay system residues H504, D534, and S619. One can recognise a PDZ domain in the interval 680-733; the sequence is IVSLNSFERQAVKLPGKVKNGVVVDQVDNNGLADQSGLKKGDVITELDGKLLED.

It belongs to the peptidase S1C family.

The protein localises to the cell membrane. The chain is Serine protease HtrA-like from Staphylococcus aureus (strain NCTC 8325 / PS 47).